The primary structure comprises 385 residues: Beta-lactamase (385 aa).

The signal sequence occupies residues 1 to 20 (MKRLLAFCLLFFAALGQAKV). Catalysis depends on serine 84, which acts as the Acyl-ester intermediate. Residue tyrosine 170 is the Proton acceptor of the active site. 335–337 (KTG) is a substrate binding site.

The protein belongs to the class-C beta-lactamase family.

Its subcellular location is the periplasm. It catalyses the reaction a beta-lactam + H2O = a substituted beta-amino acid. Its function is as follows. This protein is a serine beta-lactamase with a substrate specificity for cephalosporins. The sequence is that of Beta-lactamase from Lysobacter lactamgenus.